Reading from the N-terminus, the 138-residue chain is Nucleoside diphosphate kinase (138 aa).

The ATP site is built by lysine 9, phenylalanine 57, arginine 85, threonine 91, arginine 102, and asparagine 112. The Pros-phosphohistidine intermediate role is filled by histidine 115.

Belongs to the NDK family. In terms of assembly, homotetramer. The cofactor is Mg(2+).

The protein resides in the cytoplasm. It carries out the reaction a 2'-deoxyribonucleoside 5'-diphosphate + ATP = a 2'-deoxyribonucleoside 5'-triphosphate + ADP. The catalysed reaction is a ribonucleoside 5'-diphosphate + ATP = a ribonucleoside 5'-triphosphate + ADP. Functionally, major role in the synthesis of nucleoside triphosphates other than ATP. The ATP gamma phosphate is transferred to the NDP beta phosphate via a ping-pong mechanism, using a phosphorylated active-site intermediate. In Desulforapulum autotrophicum (strain ATCC 43914 / DSM 3382 / VKM B-1955 / HRM2) (Desulfobacterium autotrophicum), this protein is Nucleoside diphosphate kinase.